We begin with the raw amino-acid sequence, 104 residues long: L-rhamnose mutarotase (104 aa).

Residue tyrosine 18 participates in substrate binding. Histidine 22 serves as the catalytic Proton donor. Residues tyrosine 41 and 76–77 contribute to the substrate site; that span reads WW.

This sequence belongs to the rhamnose mutarotase family. Homodimer.

The protein localises to the cytoplasm. The enzyme catalyses alpha-L-rhamnose = beta-L-rhamnose. It participates in carbohydrate metabolism; L-rhamnose metabolism. Involved in the anomeric conversion of L-rhamnose. This is L-rhamnose mutarotase from Phocaeicola vulgatus (strain ATCC 8482 / DSM 1447 / JCM 5826 / CCUG 4940 / NBRC 14291 / NCTC 11154) (Bacteroides vulgatus).